A 240-amino-acid polypeptide reads, in one-letter code: NDR1/HIN1-like protein 2 (240 aa).

Residues 57 to 77 traverse the membrane as a helical segment; the sequence is NILIAVAVILGVAALILWLIF. 4 N-linked (GlcNAc...) asparagine glycosylation sites follow: N109, N141, N151, and N223.

As to expression, expressed at low levels in roots, rosette leaves, cauline leaves, stems, flowers and siliques.

It localises to the cell membrane. Its function is as follows. May play a role in plant immunity. In Arabidopsis thaliana (Mouse-ear cress), this protein is NDR1/HIN1-like protein 2.